A 1068-amino-acid polypeptide reads, in one-letter code: Leucine zipper protein 1 (1068 aa).

Residue Ala2 is modified to N-acetylalanine. The stretch at 11–354 (ASNRHLRFKL…KLQVRKQKEL (344 aa)) forms a coiled coil. Disordered stretches follow at residues 251–292 (LSSK…VKDL), 375–402 (TKLKGHGSEASVSKHTSRELSPQHKRER), and 432–558 (AAKA…QAVE). Residues 254–292 (KESKRKGSLDYLKQVENETRDKSENEKNRNQEDNKVKDL) are compositionally biased toward basic and acidic residues. Phosphoserine occurs at positions 256, 261, 395, 513, 571, 575, 612, and 660. Over residues 510–519 (RTFSDSTHVS) the composition is skewed to polar residues. Residues 677–700 (TTITPEPEPKPQPNSREKVKSRGG) form a disordered region. Thr680 is modified (phosphothreonine). Ser691 and Ser746 each carry phosphoserine. The disordered stretch occupies residues 782–829 (QKSTSKSVTSKVTSSITIYPSDSSGPRAVPSEAPRERHTSTSNIQVGP). The span at 785-796 (TSKSVTSKVTSS) shows a compositional bias: low complexity. The interval 834-884 (AISNHVSSPLELSIHKHDITLQLTEAERVGDGSPKNRAEMVVSRSSILIKP) is required for interaction with FLNA. Ser906 bears the Phosphoserine mark. A disordered region spans residues 924 to 945 (RDLKCSEDPPTGIGRNMEATNA). Position 952 is a phosphothreonine (Thr952). Disordered stretches follow at residues 959-995 (QPRSQPSEQGARRVGNSGDAPELSPRRTQSSLTASEV) and 1033-1068 (NPLEHSELPGKQGLPEPEPVWTEERLHPAKPYAEED). Polar residues predominate over residues 984–994 (RRTQSSLTASE). Phosphoserine is present on Ser988.

Component of the CERF-1 ISWI chromatin remodeling complex (also called the CECR2-containing remodeling factor (CERF) complex) at least composed of CECR2 and SMARCA1. Component of the CERF-5 ISWI chromatin remodeling complex at least composed of CECR2 and SMARCA5/SNF2H. LUZP1 is detected as part of the CERF-1 and CERF-5 complexes in embryonic stem (ES) cells where it is involved in complex stabilization but is not detected in the complexes in the testis. Interacts (via C-terminus) with LIMA1/EPLIN; both proteins restrict ciliation and may work together to regulate this process. Interacts with myosin light chain MYL9; the interaction results in inhibition of phosphorylation of MYL9 by DAPK3. Interacts with DAPK3; the interaction is likely to occur throughout the cell cycle and reduces the LUZP1-mediated suppression of MYL9 phosphorylation. Interacts with the chromosomal passenger complex (CPC); CPC kinase activity is required for localization of LUZP1 to the centromere. As to expression, predominantly expressed in the brain (at protein level).

Its subcellular location is the cytoplasm. It localises to the cytoskeleton. The protein resides in the microtubule organizing center. It is found in the centrosome. The protein localises to the cilium basal body. Its subcellular location is the midbody. It localises to the chromosome. The protein resides in the centromere. It is found in the spindle. The protein localises to the stress fiber. Its subcellular location is the nucleus. It localises to the cell projection. The protein resides in the dendrite. It is found in the perikaryon. The protein localises to the cell junction. Its subcellular location is the tight junction. Its function is as follows. F-actin cross-linking protein. Stabilizes actin and acts as a negative regulator of primary cilium formation. Positively regulates the phosphorylation of both myosin II and protein phosphatase 1 regulatory subunit PPP1R12A/MYPT1 and promotes the assembly of myosin II stacks within actin stress fibers. Inhibits the phosphorylation of myosin light chain MYL9 by DAPK3 and suppresses the constriction velocity of the contractile ring during cytokinesis. Binds to microtubules and promotes epithelial cell apical constriction by up-regulating levels of diphosphorylated myosin light chain (MLC) through microtubule-dependent inhibition of MLC dephosphorylation by myosin phosphatase. Involved in regulation of cell migration, nuclear size and centriole number, probably through regulation of the actin cytoskeleton. Component of the CERF-1 and CERF-5 chromatin remodeling complexes in embryonic stem cells where it acts to stabilize the complexes. Plays a role in embryonic brain and cardiovascular development. This is Leucine zipper protein 1 (Luzp1) from Mus musculus (Mouse).